Consider the following 676-residue polypeptide: RNA helicase NPH-II (676 aa).

Residues 172-347 (FSAWISHRPV…VFLPNPAFIH (176 aa)) form the Helicase ATP-binding domain. An ATP-binding site is contributed by 185–192 (GGTGVGKT). Residues 296–299 (DEVH) carry the DEXH box motif. A Helicase C-terminal domain is found at 366 to 535 (NPSSRMAYIE…NYILYANKFN (170 aa)).

Belongs to the DEAD box helicase family. DEAH subfamily. In terms of assembly, monomer.

It is found in the virion. It catalyses the reaction ATP + H2O = ADP + phosphate + H(+). In terms of biological role, NTP-dependent helicase that catalyzes unidirectional unwinding of 3'tailed duplex RNAs and plays an important role during transcription of early mRNAs, presumably by preventing R-loop formation behind the elongating RNA polymerase. Might also play a role in the export of newly synthesized mRNA chains out of the core into the cytoplasm. Required for replication and propagation of viral particles. The sequence is that of RNA helicase NPH-II (OPG084) from Homo sapiens (Human).